A 176-amino-acid chain; its full sequence is Large ribosomal subunit protein uL6 (176 aa).

The protein belongs to the universal ribosomal protein uL6 family. As to quaternary structure, part of the 50S ribosomal subunit.

In terms of biological role, this protein binds to the 23S rRNA, and is important in its secondary structure. It is located near the subunit interface in the base of the L7/L12 stalk, and near the tRNA binding site of the peptidyltransferase center. The sequence is that of Large ribosomal subunit protein uL6 from Dechloromonas aromatica (strain RCB).